The chain runs to 190 residues: UPF0200 protein TSIB_0920 (190 aa).

An ATP-binding site is contributed by 7-14; the sequence is GMPGSGKG.

Belongs to the UPF0200 family.

This chain is UPF0200 protein TSIB_0920, found in Thermococcus sibiricus (strain DSM 12597 / MM 739).